A 763-amino-acid chain; its full sequence is Putative pentatricopeptide repeat-containing protein At1g74580 (763 aa).

PPR repeat units follow at residues 39–69, 75–109, 110–144, 145–179, 180–214, 215–249, 250–284, 285–319, 320–354, 355–389, 390–424, 425–459, 460–494, 495–529, 530–564, 565–595, 601–635, 636–670, and 671–705; these read TLST…MREN, LEGV…DCEP, TVFS…GITP, DVYS…GCEM, NVVA…GVSL, CLST…GVLP, NLFT…GPKP, DVIT…GLEP, DSYT…GFVP, DQFT…GIKP, NVIL…GLIP, EVQT…GYFP, DIFT…GVDP, DVYT…GCAP, NLFT…SVNP, DAVT…MEEA, STPT…CLGP, DGYT…GFIP, and SLTT…GLVP.

The protein belongs to the PPR family. P subfamily.

This Arabidopsis thaliana (Mouse-ear cress) protein is Putative pentatricopeptide repeat-containing protein At1g74580.